We begin with the raw amino-acid sequence, 460 residues long: ATP synthase subunit beta (460 aa).

150–157 contributes to the ATP binding site; the sequence is GGAGVGKT.

This sequence belongs to the ATPase alpha/beta chains family. In terms of assembly, F-type ATPases have 2 components, CF(1) - the catalytic core - and CF(0) - the membrane proton channel. CF(1) has five subunits: alpha(3), beta(3), gamma(1), delta(1), epsilon(1). CF(0) has three main subunits: a(1), b(2) and c(9-12). The alpha and beta chains form an alternating ring which encloses part of the gamma chain. CF(1) is attached to CF(0) by a central stalk formed by the gamma and epsilon chains, while a peripheral stalk is formed by the delta and b chains.

Its subcellular location is the cell inner membrane. It carries out the reaction ATP + H2O + 4 H(+)(in) = ADP + phosphate + 5 H(+)(out). Produces ATP from ADP in the presence of a proton gradient across the membrane. The catalytic sites are hosted primarily by the beta subunits. This chain is ATP synthase subunit beta, found in Edwardsiella ictaluri (strain 93-146).